We begin with the raw amino-acid sequence, 883 residues long: Glutamate receptor 2 (883 aa).

The first 21 residues, 1-21, serve as a signal peptide directing secretion; that stretch reads MQKIMHISVLLSPVLWGLIFG. The Extracellular segment spans residues 22-543; it reads VSSNSIQIGG…GVFSFLDPLA (522 aa). A disulfide bridge connects residues Cys-78 and Cys-330. Asn-256, Asn-370, Asn-406, and Asn-413 each carry an N-linked (GlcNAc...) asparagine glycan. Residues Pro-499, Thr-501, and Arg-506 each contribute to the L-glutamate site. The helical transmembrane segment at 544-564 threads the bilayer; the sequence is YEIWMCIVFAYIGVSVVLFLV. The Cytoplasmic segment spans residues 565 to 591; the sequence is SRFSPYEWHTEEFEDGRETQSSESTNE. The helical; Pore-forming intramembrane region spans 592 to 607; the sequence is FGIFNSLWFSLGAFMQ. An intramembrane segment occupies 608–610; the sequence is QGC. Cys-610 carries S-palmitoyl cysteine lipidation. Residues 611–616 lie on the Cytoplasmic side of the membrane; the sequence is DISPRS. The helical transmembrane segment at 617–637 threads the bilayer; sequence LSGRIVGGVWWFFTLIIISSY. At 638–812 the chain is on the extracellular side; sequence TANLAAFLTV…EKTSALSLSN (175 aa). L-glutamate-binding residues include Ser-675 and Thr-676. Residue Ser-683 is modified to Phosphoserine; by PKC. Phosphoserine; by PKG is present on Ser-717. Residue Glu-726 coordinates L-glutamate. A disulfide bond links Cys-739 and Cys-794. A helical membrane pass occupies residues 813 to 833; the sequence is VAGVFYILVGGLGLAMLVALI. Over 834–883 the chain is Cytoplasmic; it reads EFCYKSRAEAKRMKVAKNPQNINPSSSQNSQNFATYKEGYNVYGIESVKI. A lipid anchor (S-palmitoyl cysteine) is attached at Cys-836. Ser-860 and Ser-863 each carry phosphoserine. The tract at residues 867–877 is required for interaction with IQSEC1; that stretch reads ATYKEGYNVYG. Tyr-876 carries the post-translational modification Phosphotyrosine. Ser-880 bears the Phosphoserine mark.

It belongs to the glutamate-gated ion channel (TC 1.A.10.1) family. GRIA2 subfamily. Homotetramer or heterotetramer of pore-forming glutamate receptor subunits. Tetramers may be formed by the dimerization of dimers. May interact with MPP4. Forms a ternary complex with GRIP1 and CSPG4. Interacts with ATAD1 in an ATP-dependent manner. ATAD1-catalyzed ATP hydrolysis disrupts binding to ATAD1 and to GRIP1 and leads to AMPAR complex disassembly. Interacts with GRIP2. Interacts with GRIP1. Interacts with NSF via its C-terminus. Interacts with CACNG2, PICK1 and GRIP2. Interacts with GRIA1 and SYNDIG1. Part of a complex containing GRIA2, NSF and NAPA and/or NAPB. Interacts with SNX27 (via PDZ domain); the interaction is required for recycling to the plasma membrane when endocytosed and prevent degradation in lysosomes. Interacts with LRFN1. Found in a complex with GRIA1, GRIA3, GRIA4, CNIH2, CNIH3, CACNG2, CACNG3, CACNG4, CACNG5, CACNG7 and CACNG8. Interacts with CACNG5. Interacts with OLFM2. Interacts with AP4B1, AP4E1 and AP4M1; probably indirect it mediates the somatodendritic localization of GRIA2 in neurons. Forms a complex with GRIP1, NSG1 and STX12; controls the intracellular fate of AMPAR and the endosomal sorting of the GRIA2 subunit toward recycling and membrane targeting. Interacts with IQSEC1; the interaction is required for ARF6 activation. Interacts (heterotetramer form) with CNIH2 and CNIH3; this interaction promotes expression at the plasma membrane and extensively modulates their gating properties by slowing deactivation and desensitization kinetics. In terms of processing, palmitoylated. Depalmitoylated upon L-glutamate stimulation. Cys-610 palmitoylation leads to Golgi retention and decreased cell surface expression. In contrast, Cys-836 palmitoylation does not affect cell surface expression but regulates stimulation-dependent endocytosis. Phosphorylation at Tyr-876 is required for interaction with IQSEC1 and ARF6 activation, which in turn triggers AMPAR internalization for persistent synaptic depression. Post-translationally, ubiquitinated by RNF167, leading to its degradation. In terms of processing, N-glycosylated. In terms of tissue distribution, detected in forebrain. Detected in dendrites of neuronal cells. Expressed in the pyramidal cell layers of CA1 and CA3 and in the granule cell layer of the dentate gyrus.

The protein resides in the cell membrane. It is found in the postsynaptic cell membrane. It localises to the postsynaptic density membrane. It carries out the reaction Ca(2+)(in) = Ca(2+)(out). The catalysed reaction is Na(+)(in) = Na(+)(out). Functionally, ionotropic glutamate receptor that functions as a ligand-gated cation channel, gated by L-glutamate and glutamatergic agonists such as alpha-amino-3-hydroxy-5-methyl-4-isoxazolepropionic acid (AMPA), quisqualic acid, and kainic acid. L-glutamate acts as an excitatory neurotransmitter at many synapses in the central nervous system and plays an important role in fast excitatory synaptic transmission. Binding of the excitatory neurotransmitter L-glutamate induces a conformation change, leading to the opening of the cation channel, and thereby converts the chemical signal to an electrical impulse upon entry of monovalent and divalent cations such as sodium and calcium. The receptor then desensitizes rapidly and enters in a transient inactive state, characterized by the presence of bound agonist. In the presence of CACNG4 or CACNG7 or CACNG8, shows resensitization which is characterized by a delayed accumulation of current flux upon continued application of L-glutamate. Through complex formation with NSG1, GRIP1 and STX12 controls the intracellular fate of AMPAR and the endosomal sorting of the GRIA2 subunit toward recycling and membrane targeting. In Rattus norvegicus (Rat), this protein is Glutamate receptor 2.